A 23-amino-acid polypeptide reads, in one-letter code: Unknown protein 1 (23 aa).

This Coniferiporia sulphurascens (Laminated root rot fungus) protein is Unknown protein 1.